The primary structure comprises 205 residues: MILSVLSSPALVSGLMVARAKNPVHSVLFPIPVFRDTSGLLLLLGLDFFAMIFPVVHIGAIAVSFLFVVMMFHIQIAEIHEEVLRYLPVSGIIGLIFWWEMFFILDNESIPLLPTQRNTTSLRYTVYAGKVRSWTNLETLGNLLYTYYSVWFLVPSLILLVAMIGAIVLTMHRTTKVKRQDVFRRNAIDFRRTIMRRTTDPLTIY.

A run of 3 helical transmembrane segments spans residues 48-68 (FFAM…FLFV), 86-106 (YLPV…FILD), and 150-170 (VWFL…IVLT).

It belongs to the complex I subunit 6 family. As to quaternary structure, complex I is composed of about 45 different subunits.

It is found in the mitochondrion membrane. The catalysed reaction is a ubiquinone + NADH + 5 H(+)(in) = a ubiquinol + NAD(+) + 4 H(+)(out). Core subunit of the mitochondrial membrane respiratory chain NADH dehydrogenase (Complex I) that is believed to belong to the minimal assembly required for catalysis. Complex I functions in the transfer of electrons from NADH to the respiratory chain. The immediate electron acceptor for the enzyme is believed to be ubiquinone. The sequence is that of NADH-ubiquinone oxidoreductase chain 6 (ND6) from Brassica campestris (Field mustard).